Here is a 167-residue protein sequence, read N- to C-terminus: MALNLQDKQAIVAEVSEVAKGALSAVVADSRGVTVDKMTELRKAGREAGVYMRVVRNTLLRRVVEGTQFECLKDTLTGPTLIAYSMEHPGAAARLFKEFAKANAKFEVKAAAFEGELISAAQIDRLATLPTYDEAIARLMATMKEAAAGKLVRTLAAVRDQKEATAA.

The protein belongs to the universal ribosomal protein uL10 family. As to quaternary structure, part of the ribosomal stalk of the 50S ribosomal subunit. The N-terminus interacts with L11 and the large rRNA to form the base of the stalk. The C-terminus forms an elongated spine to which L12 dimers bind in a sequential fashion forming a multimeric L10(L12)X complex.

Functionally, forms part of the ribosomal stalk, playing a central role in the interaction of the ribosome with GTP-bound translation factors. This is Large ribosomal subunit protein uL10 from Erwinia tasmaniensis (strain DSM 17950 / CFBP 7177 / CIP 109463 / NCPPB 4357 / Et1/99).